Reading from the N-terminus, the 256-residue chain is Geranylgeranylglyceryl phosphate synthase (256 aa).

Residues Asp28 and Ser53 each coordinate Mg(2+). Sn-glycerol 1-phosphate is bound by residues 172–178, 203–204, and 225–226; these read YLEAGSG, GG, and GT.

Belongs to the GGGP/HepGP synthase family. Group II subfamily. Mg(2+) serves as cofactor.

It is found in the cytoplasm. The catalysed reaction is sn-glycerol 1-phosphate + (2E,6E,10E)-geranylgeranyl diphosphate = sn-3-O-(geranylgeranyl)glycerol 1-phosphate + diphosphate. The protein operates within membrane lipid metabolism; glycerophospholipid metabolism. In terms of biological role, prenyltransferase that catalyzes the transfer of the geranylgeranyl moiety of geranylgeranyl diphosphate (GGPP) to the C3 hydroxyl of sn-glycerol-1-phosphate (G1P). This reaction is the first ether-bond-formation step in the biosynthesis of archaeal membrane lipids. This Methanococcus maripaludis (strain C5 / ATCC BAA-1333) protein is Geranylgeranylglyceryl phosphate synthase.